Reading from the N-terminus, the 792-residue chain is Ribonucleoside-diphosphate reductase large subunit (792 aa).

Positions 1–92 (MHVIKRDGRQ…VSNLHKEAKK (92 aa)) constitute an ATP-cone domain. Residues 5–6 (KR), 11–17 (ERVMFDK), Thr53, and Asp57 contribute to the ATP site. Residue Lys17 is modified to N6-acetyllysine. Ser202 and Ser217 together coordinate GDP. The cysteines at positions 218 and 444 are disulfide-linked. Residues 226–228 (DSI), Lys243, Arg256, and 263–264 (AG) each bind dTTP. Lys376 is subject to N6-acetyllysine. Catalysis depends on Ser427, which acts as the Proton acceptor. Residue Cys429 is the Cysteine radical intermediate of the active site. Residues Glu431 and 604-607 (TAST) contribute to the GDP site. Glu431 acts as the Proton acceptor in catalysis. At Thr751 the chain carries Phosphothreonine.

Belongs to the ribonucleoside diphosphate reductase large chain family. Heterodimer of a large and a small subunit. Interacts with RRM2B. Interacts with AHCYL1 which inhibits its activity.

The protein resides in the cytoplasm. It catalyses the reaction a 2'-deoxyribonucleoside 5'-diphosphate + [thioredoxin]-disulfide + H2O = a ribonucleoside 5'-diphosphate + [thioredoxin]-dithiol. With respect to regulation, under complex allosteric control mediated by deoxynucleoside triphosphates and ATP binding to separate specificity and activation sites on the M1 subunit. The type of nucleotide bound at the specificity site determines substrate preference. It seems probable that ATP makes the enzyme reduce CDP and UDP, dGTP favors ADP reduction and dTTP favors GDP reduction. Stimulated by ATP and inhibited by dATP binding to the activity site, the dATP inhibition is mediated by AHCYL1 which stabilizes dATP in the site. In terms of biological role, provides the precursors necessary for DNA synthesis. Catalyzes the biosynthesis of deoxyribonucleotides from the corresponding ribonucleotides. The polypeptide is Ribonucleoside-diphosphate reductase large subunit (RRM1) (Pongo abelii (Sumatran orangutan)).